We begin with the raw amino-acid sequence, 651 residues long: Acetyl-coenzyme A synthetase (651 aa).

CoA contacts are provided by residues 193 to 196, threonine 313, and asparagine 337; that span reads RAGR. Residues 389 to 391, 413 to 418, aspartate 502, and arginine 517 each bind ATP; these read GEP and DTWWQT. Position 525 (serine 525) interacts with CoA. Arginine 528 is a binding site for ATP. Mg(2+) is bound by residues valine 539, histidine 541, and valine 544. Arginine 586 provides a ligand contact to CoA. An N6-acetyllysine modification is found at lysine 611.

The protein belongs to the ATP-dependent AMP-binding enzyme family. Mg(2+) is required as a cofactor. Acetylated. Deacetylation by the SIR2-homolog deacetylase activates the enzyme.

It carries out the reaction acetate + ATP + CoA = acetyl-CoA + AMP + diphosphate. Its function is as follows. Catalyzes the conversion of acetate into acetyl-CoA (AcCoA), an essential intermediate at the junction of anabolic and catabolic pathways. AcsA undergoes a two-step reaction. In the first half reaction, AcsA combines acetate with ATP to form acetyl-adenylate (AcAMP) intermediate. In the second half reaction, it can then transfer the acetyl group from AcAMP to the sulfhydryl group of CoA, forming the product AcCoA. The polypeptide is Acetyl-coenzyme A synthetase (Shewanella denitrificans (strain OS217 / ATCC BAA-1090 / DSM 15013)).